Consider the following 64-residue polypeptide: Phylloxin-B1 (64 aa).

A signal peptide spans 1 to 22 (MVFLKKSLLLVLFVGLVSLSIC). Residues 23–42 (EENKREEHEEIEENKEKAEE) constitute a propeptide that is removed on maturation. Glutamine 63 is subject to Glutamine amide.

As to expression, expressed by the skin glands.

Its subcellular location is the secreted. In terms of biological role, antimicrobial peptide against the wall-less bacteria A.laidlawii and S.melliferum, the Gram-positive bacteria B.megaterium KM, C.glutamicum ATCC 27853 and M.luteus ATCC 27853 and the Gram-negative-bacteria R.meliloti 102F34 and E.coli K12. This Phyllomedusa bicolor (Two-colored leaf frog) protein is Phylloxin-B1.